Consider the following 130-residue polypeptide: Small ribosomal subunit protein uS11c (130 aa).

It belongs to the universal ribosomal protein uS11 family. Part of the 30S ribosomal subunit.

The protein localises to the plastid. Its subcellular location is the chloroplast. The chain is Small ribosomal subunit protein uS11c from Oedogonium cardiacum (Filamentous green alga).